A 346-amino-acid chain; its full sequence is Protein NDL1 (346 aa).

Belongs to the NDRG family. In terms of assembly, interacts with GB1. Interacts with the heterodimers formed by GB1 and GG1, or GB1 and GG2. Interacts with RGS1. Expressed in root vasculature, cotyledons, leaves, petals, mature stamens and pollen grains.

It is found in the cytoplasm. Its function is as follows. Interacts with the heterotrimeric G protein beta subunit GB1 and plays an significant role in GB1-dependent regulation of lateral root formation. Involved in a signaling pathway that modulates root auxin transport and auxin gradients. Acts partially by positively regulating the auxin carrier PIN2 and AUX1. Acts, together with GB1 as positive regulator of meristem initiation and branching. GB1 and NDL1 positively regulate basipetal inflorescence auxin transport and modulate MAX2 expression in shoots, which regulates organ and lateral meristem formation by the establishment and maintenance of auxin gradients. The polypeptide is Protein NDL1 (Arabidopsis thaliana (Mouse-ear cress)).